The sequence spans 405 residues: Argininosuccinate synthase (405 aa).

ATP-binding positions include 10–18 (AYSGGLDTS) and Ala37. The L-citrulline site is built by Tyr88 and Ser93. Gly118 contributes to the ATP binding site. Residues Thr120, Asn124, and Asp125 each coordinate L-aspartate. Asn124 lines the L-citrulline pocket. L-citrulline-binding residues include Arg128, Ser177, Ser186, Glu263, and Tyr275.

It belongs to the argininosuccinate synthase family. Type 1 subfamily. As to quaternary structure, homotetramer.

Its subcellular location is the cytoplasm. The catalysed reaction is L-citrulline + L-aspartate + ATP = 2-(N(omega)-L-arginino)succinate + AMP + diphosphate + H(+). It participates in amino-acid biosynthesis; L-arginine biosynthesis; L-arginine from L-ornithine and carbamoyl phosphate: step 2/3. This chain is Argininosuccinate synthase, found in Acetivibrio thermocellus (strain ATCC 27405 / DSM 1237 / JCM 9322 / NBRC 103400 / NCIMB 10682 / NRRL B-4536 / VPI 7372) (Clostridium thermocellum).